The chain runs to 221 residues: MESVTLGVRKGAWTEEEDKLLKKCIEKYGEGKWHQVPLRSGLNRCRKSCRMRWLNYLRPNINRGNFTADEVDLIIRLHKLLGNRWSLIAGRLPGRTSNDVKNYWNTHLQKKLITYPRAQPIPKTQKTIVPKGTEAQPRAHPKSPPRPSPPSNNEILWWDNKTVSPQIDNIGIHWSIDGSIFEEPILGNLQSAGDSFLQQNQSDWSDIFLEDVNLWDLLGDD.

HTH myb-type domains are found at residues 1 to 57 and 58 to 112; these read MESV…LNYL and RPNI…QKKL. 2 consecutive DNA-binding regions (H-T-H motif) follow at residues 33–57 and 85–108; these read WHQV…LNYL and WSLI…NTHL. Positions 126-154 are disordered; the sequence is KTIVPKGTEAQPRAHPKSPPRPSPPSNNE.

Expressed in stems and leaves. Expressed at low levels in ovaries.

Its subcellular location is the nucleus. Functionally, transcription activator involved in the regulation of anthocyanin biosynthesis in red-fleshed kiwifruit varieties. Activates the transcription of genes involved in anthocyanin biosynthesis, such as dihydroflavonol reductase (DFR), anthocyanidin synthase (ANS) and UDP flavonoid glycosyltransferase (UFGT). This is Transcription factor MYB1 from Actinidia chinensis var. chinensis (Chinese soft-hair kiwi).